The following is a 179-amino-acid chain: Ribosome maturation factor RimM (179 aa).

In terms of domain architecture, PRC barrel spans 95–174; the sequence is KDEFFYFDIL…QIFCTQDAFL (80 aa).

This sequence belongs to the RimM family. As to quaternary structure, binds ribosomal protein uS19.

It is found in the cytoplasm. Functionally, an accessory protein needed during the final step in the assembly of 30S ribosomal subunit, possibly for assembly of the head region. Essential for efficient processing of 16S rRNA. May be needed both before and after RbfA during the maturation of 16S rRNA. It has affinity for free ribosomal 30S subunits but not for 70S ribosomes. The polypeptide is Ribosome maturation factor RimM (Campylobacter jejuni subsp. jejuni serotype O:6 (strain 81116 / NCTC 11828)).